A 705-amino-acid chain; its full sequence is Protein arginine N-methyltransferase 7 (705 aa).

SAM-dependent MTase PRMT-type domains follow at residues 29 to 372 (QNSW…YSLW) and 381 to 705 (TKSV…QKKL).

This sequence belongs to the class I-like SAM-binding methyltransferase superfamily. Protein arginine N-methyltransferase family. PRMT7 subfamily.

Its function is as follows. Essential arginine methyltransferase that can both catalyze the formation of omega-N monomethylarginine (MMA) and symmetrical dimethylarginine (sDMA). Specifically mediates the symmetrical dimethylation of arginine residues in the small nuclear ribonucleoproteins SmD1 and SmD3. This chain is Protein arginine N-methyltransferase 7 (Art7), found in Drosophila simulans (Fruit fly).